The primary structure comprises 235 residues: 2-C-methyl-D-erythritol 4-phosphate cytidylyltransferase (235 aa).

It belongs to the IspD/TarI cytidylyltransferase family. IspD subfamily.

The catalysed reaction is 2-C-methyl-D-erythritol 4-phosphate + CTP + H(+) = 4-CDP-2-C-methyl-D-erythritol + diphosphate. It participates in isoprenoid biosynthesis; isopentenyl diphosphate biosynthesis via DXP pathway; isopentenyl diphosphate from 1-deoxy-D-xylulose 5-phosphate: step 2/6. Its function is as follows. Catalyzes the formation of 4-diphosphocytidyl-2-C-methyl-D-erythritol from CTP and 2-C-methyl-D-erythritol 4-phosphate (MEP). The protein is 2-C-methyl-D-erythritol 4-phosphate cytidylyltransferase of Pseudomonas fluorescens (strain ATCC BAA-477 / NRRL B-23932 / Pf-5).